The primary structure comprises 224 residues: Germin-like protein 8-12 (224 aa).

The first 23 residues, 1–23, serve as a signal peptide directing secretion; that stretch reads MASSSLFLLGALLVLASWQAIVA. A disulfide bond links Cys33 and Cys48. The 154-residue stretch at 60–213 folds into the Cupin type-1 domain; that stretch reads FNAAKFDMPR…AFQVEKKLID (154 aa). Asn78 carries N-linked (GlcNAc...) asparagine glycosylation. The Mn(2+) site is built by His111, His113, Glu118, and His158.

It belongs to the germin family. Oligomer (believed to be a pentamer but probably hexamer).

It is found in the secreted. The protein resides in the extracellular space. It localises to the apoplast. Plays a role in broad-spectrum disease resistance. Probably has no oxalate oxidase activity even if the active site is conserved. The sequence is that of Germin-like protein 8-12 from Oryza sativa subsp. japonica (Rice).